We begin with the raw amino-acid sequence, 93 residues long: CRISPR-associated endoribonuclease Cas2 (93 aa).

Asp-8 lines the Mg(2+) pocket.

It belongs to the CRISPR-associated endoribonuclease Cas2 protein family. As to quaternary structure, homodimer, forms a heterotetramer with a Cas1 homodimer. It depends on Mg(2+) as a cofactor.

Functionally, CRISPR (clustered regularly interspaced short palindromic repeat), is an adaptive immune system that provides protection against mobile genetic elements (viruses, transposable elements and conjugative plasmids). CRISPR clusters contain sequences complementary to antecedent mobile elements and target invading nucleic acids. CRISPR clusters are transcribed and processed into CRISPR RNA (crRNA). Functions as a ssRNA-specific endoribonuclease. Involved in the integration of spacer DNA into the CRISPR cassette. This Thermofilum pendens (strain DSM 2475 / Hrk 5) protein is CRISPR-associated endoribonuclease Cas2.